The chain runs to 119 residues: Ribonuclease P protein component (119 aa).

Belongs to the RnpA family. Consists of a catalytic RNA component (M1 or rnpB) and a protein subunit.

The catalysed reaction is Endonucleolytic cleavage of RNA, removing 5'-extranucleotides from tRNA precursor.. RNaseP catalyzes the removal of the 5'-leader sequence from pre-tRNA to produce the mature 5'-terminus. It can also cleave other RNA substrates such as 4.5S RNA. The protein component plays an auxiliary but essential role in vivo by binding to the 5'-leader sequence and broadening the substrate specificity of the ribozyme. The polypeptide is Ribonuclease P protein component (Edwardsiella ictaluri (strain 93-146)).